A 521-amino-acid chain; its full sequence is Maturase K (521 aa).

The protein belongs to the intron maturase 2 family. MatK subfamily.

The protein resides in the plastid. Its subcellular location is the chloroplast. Its function is as follows. Usually encoded in the trnK tRNA gene intron. Probably assists in splicing its own and other chloroplast group II introns. The polypeptide is Maturase K (Anthericum liliago (St-Bernard's lily)).